The sequence spans 147 residues: D-aminoacyl-tRNA deacylase (147 aa).

A Gly-cisPro motif, important for rejection of L-amino acids motif is present at residues 136-137 (GP).

It belongs to the DTD family. In terms of assembly, homodimer.

The protein localises to the cytoplasm. The enzyme catalyses glycyl-tRNA(Ala) + H2O = tRNA(Ala) + glycine + H(+). It carries out the reaction a D-aminoacyl-tRNA + H2O = a tRNA + a D-alpha-amino acid + H(+). Functionally, an aminoacyl-tRNA editing enzyme that deacylates mischarged D-aminoacyl-tRNAs. Also deacylates mischarged glycyl-tRNA(Ala), protecting cells against glycine mischarging by AlaRS. Acts via tRNA-based rather than protein-based catalysis; rejects L-amino acids rather than detecting D-amino acids in the active site. By recycling D-aminoacyl-tRNA to D-amino acids and free tRNA molecules, this enzyme counteracts the toxicity associated with the formation of D-aminoacyl-tRNA entities in vivo and helps enforce protein L-homochirality. The protein is D-aminoacyl-tRNA deacylase of Streptococcus sanguinis (strain SK36).